The following is a 350-amino-acid chain: Alcohol dehydrogenase 1 (350 aa).

Zn(2+) contacts are provided by C44, T46, H67, C98, C101, C104, C112, and C154. An alcohol is bound by residues T46 and H67. Residue T46 participates in NAD(+) binding. Residues 178-182 (GAGGG), D202, K207, 271-273 (IGL), and R343 contribute to the NAD(+) site.

This sequence belongs to the zinc-containing alcohol dehydrogenase family. Homotetramer. The cofactor is Zn(2+).

It localises to the cytoplasm. The protein resides in the secreted. It catalyses the reaction a primary alcohol + NAD(+) = an aldehyde + NADH + H(+). The enzyme catalyses a secondary alcohol + NAD(+) = a ketone + NADH + H(+). This is Alcohol dehydrogenase 1 (alcA) from Emericella nidulans (strain FGSC A4 / ATCC 38163 / CBS 112.46 / NRRL 194 / M139) (Aspergillus nidulans).